The primary structure comprises 318 residues: uncharacterized protein (318 aa).

The next 2 helical transmembrane spans lie at 230–250 (VWTY…SFLI) and 264–284 (ASLM…LGVI).

It belongs to the glycosyltransferase 2 family. GtrB subfamily.

The protein resides in the cell membrane. This is an uncharacterized protein from Synechocystis sp. (strain ATCC 27184 / PCC 6803 / Kazusa).